A 157-amino-acid polypeptide reads, in one-letter code: Small ribosomal subunit protein uS7 (157 aa).

The protein belongs to the universal ribosomal protein uS7 family. As to quaternary structure, part of the 30S ribosomal subunit. Contacts proteins S9 and S11.

One of the primary rRNA binding proteins, it binds directly to 16S rRNA where it nucleates assembly of the head domain of the 30S subunit. Is located at the subunit interface close to the decoding center, probably blocks exit of the E-site tRNA. The sequence is that of Small ribosomal subunit protein uS7 from Chlamydia caviae (strain ATCC VR-813 / DSM 19441 / 03DC25 / GPIC) (Chlamydophila caviae).